The sequence spans 154 residues: Protein X (154 aa).

Residues 68–117 (PCALRFTSARCMATTVNAHQILPKVLHKRTLGLPAMSTTDLEAYFKDCLF) form a mitochondrial targeting sequence region.

Belongs to the orthohepadnavirus protein X family. May form homodimer. May interact with host CEBPA, CFLAR, CREB1, DDB1, E4F1, HBXIP, HSPD1/HSP60, NFKBIA, POLR2E and SMAD4. Interacts with host SMC5-SMC6 complex and induces its degradation. Interacts with host TRPC4AP; leading to prevent ubiquitination of TRPC4AP. Interacts with host PLSCR1; this interaction promotes ubiquitination and degradation of HBx and impairs HBx-mediated cell proliferation. In terms of processing, a fraction may be phosphorylated in insect cells and HepG2 cells, a human hepatoblastoma cell line. Phosphorylated in vitro by host protein kinase C or mitogen-activated protein kinase. N-acetylated in insect cells.

The protein resides in the host cytoplasm. It is found in the host nucleus. Its subcellular location is the host mitochondrion. In terms of biological role, multifunctional protein that plays a role in silencing host antiviral defenses and promoting viral transcription. Does not seem to be essential for HBV infection. May be directly involved in development of cirrhosis and liver cancer (hepatocellular carcinoma). Most of cytosolic activities involve modulation of cytosolic calcium. The effect on apoptosis is controversial depending on the cell types in which the studies have been conducted. May induce apoptosis by localizing in mitochondria and causing loss of mitochondrial membrane potential. May also modulate apoptosis by binding host CFLAR, a key regulator of the death-inducing signaling complex (DISC). Promotes viral transcription by using the host E3 ubiquitin ligase DDB1 to target the SMC5-SMC6 complex to proteasomal degradation. This host complex would otherwise bind to viral episomal DNA, and prevents its transcription. Moderately stimulates transcription of many different viral and cellular transcription elements. Promoters and enhancers stimulated by HBx contain DNA binding sites for NF-kappa-B, AP-1, AP-2, c-EBP, ATF/CREB, or the calcium-activated factor NF-AT. The protein is Protein X of Hepatitis B virus genotype A3 (isolate Cameroon/CMR983/1994) (HBV-A).